The following is a 306-amino-acid chain: tRNA pseudouridine synthase B (306 aa).

Catalysis depends on D48, which acts as the Nucleophile.

The protein belongs to the pseudouridine synthase TruB family. Type 1 subfamily.

It catalyses the reaction uridine(55) in tRNA = pseudouridine(55) in tRNA. Functionally, responsible for synthesis of pseudouridine from uracil-55 in the psi GC loop of transfer RNAs. The protein is tRNA pseudouridine synthase B of Ectopseudomonas mendocina (strain ymp) (Pseudomonas mendocina).